The following is a 1684-amino-acid chain: A-kinase anchor protein 12 (1684 aa).

Positions 1 to 124 are disordered; sequence MGAGSSTEQR…DITKDEQEET (124 aa). The N-myristoyl glycine moiety is linked to residue G2. A phosphoserine mark is found at S11, S18, S22, and S27. Residues 30–48 are compositionally biased toward low complexity; it reads GPAAEASGAAGDPADADPA. The segment covering 75-86 has biased composition (acidic residues); it reads ESQDGQEEEVTV. Over residues 89–105 the composition is skewed to basic and acidic residues; that stretch reads VGQRESEDVKEKDRAKE. A Phosphoserine modification is found at S136. Disordered stretches follow at residues 175 to 281 and 296 to 353; these read SDTV…ETTS and KKTS…SADY. A compositionally biased stretch (basic and acidic residues) spans 212-227; sequence ASKESELKQSTEKQEG. Positions 228-247 are enriched in polar residues; it reads TLKQAQSSTEIPLQAESGQG. Phosphoserine is present on residues S234 and S244. Over residues 251–266 the composition is skewed to basic and acidic residues; that stretch reads EAAKDGEENREKEPTK. The segment at 253-543 is involved in PKC-binding; sequence AKDGEENREK…QHIQTESPES (291 aa). Phosphoserine is present on residues S270 and S273. The segment covering 270-281 has biased composition (polar residues); it reads SPTSPVSNETTS. A compositionally biased stretch (basic and acidic residues) spans 302 to 320; the sequence is KPKEDDLETSEKRKEQEAE. Positions 321–342 are enriched in acidic residues; the sequence is KVDEEEGEKTEPAPAEEQEPAE. Phosphothreonine is present on T330. Phosphoserine is present on S350. Residue Y353 is modified to Phosphotyrosine. 2 positions are modified to phosphoserine: S371 and S467. The interval 421–479 is disordered; that stretch reads GSGESLPPEKLAETQEVPQEAEPVEELMKTKEVCVSGGDHTQLTDLSPEEKMLPKHPEG. Residues 468-478 are compositionally biased toward basic and acidic residues; it reads PEEKMLPKHPE. S489, S505, and S507 each carry phosphoserine. The disordered stretch occupies residues 492 to 825; that stretch reads RIKVQGSPLK…INEDDPDVPA (334 aa). Residues 497 to 511 are compositionally biased toward low complexity; the sequence is GSPLKKLFSSSGLKK. A compositionally biased stretch (basic residues) spans 512–521; that stretch reads LSGKKQKGKR. Phosphoserine is present on residues S540, S543, S584, S598, S613, and S615. Positions 593 to 613 match the AKAP CaM-binding 1 motif; that stretch reads ITPWASFKKMVTPKKRVRRPS. A compositionally biased stretch (basic and acidic residues) spans 611 to 625; sequence RPSESDKEEELDKVK. Over residues 626-637 the composition is skewed to low complexity; that stretch reads SATLSSTESTAS. The residue at position 628 (T628) is a Phosphothreonine. Residues S630, S631, S634, and S637 each carry the phosphoserine modification. Basic and acidic residues predominate over residues 641–660; it reads DEVRAVGEEQRSEEPKRRVD. 3 positions are modified to phosphoserine: S682, S683, and S684. Positions 696 to 710 are enriched in basic and acidic residues; the sequence is DGHRAEEASKDKEAD. The span at 714-723 shows a compositional bias: polar residues; sequence ASTQEQDQAH. The segment covering 724 to 741 has biased composition (low complexity); it reads GSSSPEPAGSPSEGEGVS. A phosphoserine mark is found at S733, S745, S767, and S786. The short motif at 740–760 is the AKAP CaM-binding 2 element; the sequence is VSTWESFKRLVTPRKKSKSKL. The AKAP CaM-binding 3 signature appears at 781–801; that stretch reads EESWVSIKKFIPGRRKKRADG. T871 carries the phosphothreonine modification. S873 is subject to Phosphoserine. The interval 970-1001 is disordered; that stretch reads TEASGAEETTDMVSAVSQLSDSPDTTEEATPV. Positions 980-992 are enriched in polar residues; it reads DMVSAVSQLSDSP. K1030 is covalently cross-linked (Glycyl lysine isopeptide (Lys-Gly) (interchain with G-Cter in SUMO1)). Disordered stretches follow at residues 1055 to 1106, 1121 to 1211, 1232 to 1365, and 1391 to 1492; these read VEED…VTED, LMEQ…DVLE, EGEA…DKAD, and TVAT…REKI. S1059 is subject to Phosphoserine. Residues 1130 to 1176 are compositionally biased toward polar residues; it reads SSETLTDSETNGSTPLADSDTPNGTQQDETVDSQDSNAIAAVKQSQV. 2 stretches are compositionally biased toward basic and acidic residues: residues 1198–1210 and 1239–1254; these read QEEH…RDVL and DGEK…ELEV. S1292 is modified (phosphoserine). The segment covering 1293-1331 has biased composition (basic and acidic residues); the sequence is PEKREMGTDVEKEETETKTEQASEEHEQETAAPEHEGTH. A phosphoserine mark is found at S1351, S1355, and S1357. Basic and acidic residues predominate over residues 1467 to 1492; that stretch reads QRSDEDNKPDAGPDAAGKESAAREKI. The tract at residues 1501-1514 is RII-binding; that stretch reads ELESKSNKIVQSVI. S1546 and S1645 each carry phosphoserine. The disordered stretch occupies residues 1568-1684; it reads TLSAVAQEGL…QEPKGDLTES (117 aa). A compositionally biased stretch (basic and acidic residues) spans 1653–1684; it reads LTEEGDALKEEMNKAQTEEDDLQEPKGDLTES.

In terms of assembly, binds to dimeric RII-alpha regulatory subunit of PKC. As to expression, isoform 1 is predominantly found in the nervous system. Isoform 3 is testis specific.

It is found in the cytoplasm. The protein resides in the cytoskeleton. Its subcellular location is the membrane. Anchoring protein that mediates the subcellular compartmentation of protein kinase A (PKA) and protein kinase C (PKC). This chain is A-kinase anchor protein 12 (Akap12), found in Mus musculus (Mouse).